The sequence spans 378 residues: Chaperone protein DnaJ (378 aa).

In terms of domain architecture, J spans 3 to 67 (DYYDLLGVSK…QTRGRYDQFG (65 aa)). Residues 133–215 (GQEREIKIPH…CAGQGVRQVR (83 aa)) form a CR-type zinc finger. Residues Cys146, Cys149, Cys163, Cys166, Cys189, Cys192, Cys203, and Cys206 each coordinate Zn(2+). CXXCXGXG motif repeat units lie at residues 146-153 (CDTCNGTG), 163-170 (CSTCGGVG), 189-196 (CPSCEGTG), and 203-210 (CPACAGQG).

This sequence belongs to the DnaJ family. As to quaternary structure, homodimer. Requires Zn(2+) as cofactor.

It is found in the cytoplasm. Participates actively in the response to hyperosmotic and heat shock by preventing the aggregation of stress-denatured proteins and by disaggregating proteins, also in an autonomous, DnaK-independent fashion. Unfolded proteins bind initially to DnaJ; upon interaction with the DnaJ-bound protein, DnaK hydrolyzes its bound ATP, resulting in the formation of a stable complex. GrpE releases ADP from DnaK; ATP binding to DnaK triggers the release of the substrate protein, thus completing the reaction cycle. Several rounds of ATP-dependent interactions between DnaJ, DnaK and GrpE are required for fully efficient folding. Also involved, together with DnaK and GrpE, in the DNA replication of plasmids through activation of initiation proteins. The protein is Chaperone protein DnaJ of Prochlorococcus marinus (strain MIT 9313).